Consider the following 617-residue polypeptide: mRNA-decapping enzyme 1B (617 aa).

A2 carries the post-translational modification N-acetylalanine. The residue at position 147 (S147) is a Phosphoserine. Position 191 is a phosphotyrosine (Y191). Disordered regions lie at residues 195 to 222 (NLIK…LDPE) and 243 to 266 (TVEP…KLPI). A compositionally biased stretch (polar residues) spans 205-219 (SENQQQRIPQPNQTL). Over residues 252–261 (QQQQQQQQQQ) the composition is skewed to low complexity. 2 positions are modified to phosphoserine: S275 and S336. The interval 362 to 426 (TPGAANKCDP…VGHQAHGREQ (65 aa)) is disordered. Positions 371 to 381 (PSTPAPASSAA) are enriched in low complexity. Phosphothreonine is present on T392. S448 and S511 each carry phosphoserine.

Belongs to the DCP1 family. As to quaternary structure, interacts with DCP1A. (Microbial infection) Interacts with rotavirus A non-structural protein 2; this interaction probably plays a role in the sequestration of DCP1B in viral factories. Interacts with rotavirus A non-structural protein 5; this interaction probably plays a role in its sequestration in viral factories.

The protein localises to the cytoplasm. It is found in the nucleus. It catalyses the reaction a 5'-end (N(7)-methyl 5'-triphosphoguanosine)-ribonucleoside in mRNA + H2O = N(7)-methyl-GDP + a 5'-end phospho-ribonucleoside in mRNA + 2 H(+). Its function is as follows. May play a role in the degradation of mRNAs, both in normal mRNA turnover and in nonsense-mediated mRNA decay. May remove the 7-methyl guanine cap structure from mRNA molecules, yielding a 5'-phosphorylated mRNA fragment and 7m-GDP. The sequence is that of mRNA-decapping enzyme 1B (DCP1B) from Homo sapiens (Human).